The following is a 301-amino-acid chain: ADP-ribosyl cyclase/cyclic ADP-ribose hydrolase 1 (301 aa).

Residues 1–21 (MANCEFSPVSGDKPCCRLSRR) are Cytoplasmic-facing. The chain crosses the membrane as a helical; Signal-anchor for type II membrane protein span at residues 22 to 43 (AQVCLGVCLLVLLILVVVVAVV). At 44-301 (LPRWRQQWSG…PEDSSCLSGI (258 aa)) the chain is on the extracellular side. 3 disulfide bridges follow: Cys-68/Cys-83, Cys-100/Cys-181, and Cys-161/Cys-174. Asn-101 carries an N-linked (GlcNAc...) asparagine glycan. Cys-120 is an active-site residue. Residue Asn-121 is glycosylated (N-linked (GlcNAc...) asparagine). Cys-202 is a catalytic residue. 2 N-linked (GlcNAc...) asparagine glycosylation sites follow: Asn-210 and Asn-220. Disulfide bonds link Cys-255–Cys-276 and Cys-288–Cys-297.

It belongs to the ADP-ribosyl cyclase family. Homodimer.

The protein resides in the cell surface. Its subcellular location is the membrane. The enzyme catalyses NAD(+) = cyclic ADP-beta-D-ribose + nicotinamide + H(+). It carries out the reaction 2'-phospho-cyclic ADP-ribose + nicotinate = nicotinate-adenine dinucleotide phosphate. The catalysed reaction is NAD(+) + H2O = ADP-D-ribose + nicotinamide + H(+). It catalyses the reaction nicotinate + NADP(+) = nicotinate-adenine dinucleotide phosphate + nicotinamide. Its activity is regulated as follows. ATP inhibits the cADPR hydrolyzing activity. Functionally, synthesizes cyclic ADP-ribose (cADPR), a second messenger for glucose-induced insulin secretion. Synthesizes the Ca(2+) mobilizer nicotinate-adenine dinucleotide phosphate, NAADP(+), from 2'-phospho-cADPR and nicotinic acid, as well as from NADP(+) and nicotinic acid. Also has cADPR hydrolase activity. The sequence is that of ADP-ribosyl cyclase/cyclic ADP-ribose hydrolase 1 (CD38) from Macaca fascicularis (Crab-eating macaque).